A 420-amino-acid polypeptide reads, in one-letter code: Acetyl-CoA acetyltransferase, mitochondrial (420 aa).

Residues Met-1–Tyr-26 constitute a mitochondrion transit peptide. Cys-119 acts as the Acyl-thioester intermediate in catalysis. CoA-binding positions include Tyr-212, Lys-251–Asp-253, and Lys-256. Tyr-212 contacts K(+). K(+)-binding residues include Ala-273, Ala-274, and Ala-276. CoA is bound at residue Ser-277. Val-374 lines the K(+) pocket. Residue Cys-406 is the Proton donor/acceptor of the active site.

Belongs to the thiolase-like superfamily. Thiolase family. As to quaternary structure, homotetramer.

It localises to the mitochondrion. It carries out the reaction 2 acetyl-CoA = acetoacetyl-CoA + CoA. It catalyses the reaction propanoyl-CoA + acetyl-CoA = 2-methyl-3-oxobutanoyl-CoA + CoA. The protein operates within lipid metabolism; fatty acid beta-oxidation. In terms of biological role, this is one of the enzymes that catalyzes the last step of the mitochondrial beta-oxidation pathway, an aerobic process breaking down fatty acids into acetyl-CoA. Using free coenzyme A/CoA, catalyzes the thiolytic cleavage of medium- to long-chain 3-oxoacyl-CoAs into acetyl-CoA and a fatty acyl-CoA shortened by two carbon atoms. The activity of the enzyme is reversible and it can also catalyze the condensation of two acetyl-CoA molecules into acetoacetyl-CoA. Thereby, it plays a major role in ketone body metabolism. In Danio rerio (Zebrafish), this protein is Acetyl-CoA acetyltransferase, mitochondrial (acat1).